The chain runs to 318 residues: tRNA dimethylallyltransferase (318 aa).

Residue 16 to 23 participates in ATP binding; sequence GPTASGKT. A substrate-binding site is contributed by 18–23; sequence TASGKT. 4 interaction with substrate tRNA regions span residues 41-44, 165-169, 246-251, and 279-286; these read DSAL, QRINR, RCVGYR, and KRQITWLR.

This sequence belongs to the IPP transferase family. In terms of assembly, monomer. Mg(2+) is required as a cofactor.

It catalyses the reaction adenosine(37) in tRNA + dimethylallyl diphosphate = N(6)-dimethylallyladenosine(37) in tRNA + diphosphate. Functionally, catalyzes the transfer of a dimethylallyl group onto the adenine at position 37 in tRNAs that read codons beginning with uridine, leading to the formation of N6-(dimethylallyl)adenosine (i(6)A). This chain is tRNA dimethylallyltransferase, found in Actinobacillus succinogenes (strain ATCC 55618 / DSM 22257 / CCUG 43843 / 130Z).